Reading from the N-terminus, the 196-residue chain is ATP-dependent Clp protease proteolytic subunit (196 aa).

The active-site Nucleophile is serine 101. Histidine 126 is a catalytic residue.

It belongs to the peptidase S14 family. As to quaternary structure, component of the chloroplastic Clp protease core complex.

It localises to the plastid. It is found in the chloroplast stroma. The enzyme catalyses Hydrolysis of proteins to small peptides in the presence of ATP and magnesium. alpha-casein is the usual test substrate. In the absence of ATP, only oligopeptides shorter than five residues are hydrolyzed (such as succinyl-Leu-Tyr-|-NHMec, and Leu-Tyr-Leu-|-Tyr-Trp, in which cleavage of the -Tyr-|-Leu- and -Tyr-|-Trp bonds also occurs).. Its function is as follows. Cleaves peptides in various proteins in a process that requires ATP hydrolysis. Has a chymotrypsin-like activity. Plays a major role in the degradation of misfolded proteins. This chain is ATP-dependent Clp protease proteolytic subunit, found in Arabis hirsuta (Hairy rock-cress).